The primary structure comprises 238 residues: MIYAGILAGGIGSRMGNVPLPKQFLLLQGKPIIIHTVEKFLMYKDFDEIIIATPQKWINYMHDLLNNYRLDDKKIKVIQGGDDRNHTIMNIIESIEQHKKLNDEDIIVTHDAVRPFLTNRIIRENVEYASQYGAVDTVVNAVDTIISSNDAQFISEIPIRSEMYQGQTPQTFKIKELKDSYLSLTQSQKEILTDACKILVELGKPVKLVKGELFNIKITTPYDLKVANSIITGAVDND.

Residues 7–10 (LAGG) and 81–87 (GDDRNHT) contribute to the CTP site.

The protein belongs to the IspD/TarI cytidylyltransferase family. TarI subfamily.

It carries out the reaction D-ribitol 5-phosphate + CTP + H(+) = CDP-L-ribitol + diphosphate. The protein operates within cell wall biogenesis; poly(ribitol phosphate) teichoic acid biosynthesis. Catalyzes the transfer of the cytidylyl group of CTP to D-ribitol 5-phosphate. This chain is Ribitol-5-phosphate cytidylyltransferase, found in Staphylococcus epidermidis (strain ATCC 35984 / DSM 28319 / BCRC 17069 / CCUG 31568 / BM 3577 / RP62A).